We begin with the raw amino-acid sequence, 365 residues long: Aminomethyltransferase (365 aa).

Belongs to the GcvT family. In terms of assembly, the glycine cleavage system is composed of four proteins: P, T, L and H.

It catalyses the reaction N(6)-[(R)-S(8)-aminomethyldihydrolipoyl]-L-lysyl-[protein] + (6S)-5,6,7,8-tetrahydrofolate = N(6)-[(R)-dihydrolipoyl]-L-lysyl-[protein] + (6R)-5,10-methylene-5,6,7,8-tetrahydrofolate + NH4(+). In terms of biological role, the glycine cleavage system catalyzes the degradation of glycine. This is Aminomethyltransferase from Parafrankia sp. (strain EAN1pec).